A 408-amino-acid polypeptide reads, in one-letter code: Putative mannan endo-1,4-beta-mannosidase 4 (408 aa).

Positions 1–23 (MKCLCFIVLLAIVIAQSYVGVEA) are cleaved as a signal peptide. N-linked (GlcNAc...) asparagine glycosylation occurs at Asn73. Positions 85 and 201 each coordinate substrate. Catalysis depends on Glu202, which acts as the Proton donor. Catalysis depends on Glu322, which acts as the Nucleophile. Trp364 serves as a coordination point for substrate.

The protein belongs to the glycosyl hydrolase 5 (cellulase A) family.

It localises to the secreted. The enzyme catalyses Random hydrolysis of (1-&gt;4)-beta-D-mannosidic linkages in mannans, galactomannans and glucomannans.. This chain is Putative mannan endo-1,4-beta-mannosidase 4 (MAN4), found in Arabidopsis thaliana (Mouse-ear cress).